A 299-amino-acid polypeptide reads, in one-letter code: MGQFNQTEKGSFEIKVALAEMLKGGVIMDVTNSEQAKIAEDAGAVAVMALERIPSDIRVQGGIARMSNPELIQKIQETVSIPVMAKCRIGHFVEAQILESLQVDFIDESEVLTPADEENHIDKHIFKVPFVCGCRDLGEALRRIGEGAAMIRTKGEAGTGNVVEAVRHMRAINREIRHLMLMDSSELMAEAKRLGAPFHLVQMVAKSGVLPVPNFAAGGIATPADAALMMQLGAQSVFVGSGIFKSEDPAKRARAIVGATTFFQNPEKLAQFSMDLLDAMKGIDIRQLKREDLMAQRGW.

A D-ribose 5-phosphate-binding site is contributed by Asp-29. Lys-86 (schiff-base intermediate with D-ribose 5-phosphate) is an active-site residue. Gly-158 provides a ligand contact to D-ribose 5-phosphate. Arg-170 is a D-glyceraldehyde 3-phosphate binding site. Residues Gly-219 and 240–241 (GS) each bind D-ribose 5-phosphate.

The protein belongs to the PdxS/SNZ family. In the presence of PdxT, forms a dodecamer of heterodimers.

It catalyses the reaction aldehydo-D-ribose 5-phosphate + D-glyceraldehyde 3-phosphate + L-glutamine = pyridoxal 5'-phosphate + L-glutamate + phosphate + 3 H2O + H(+). It participates in cofactor biosynthesis; pyridoxal 5'-phosphate biosynthesis. In terms of biological role, catalyzes the formation of pyridoxal 5'-phosphate from ribose 5-phosphate (RBP), glyceraldehyde 3-phosphate (G3P) and ammonia. The ammonia is provided by the PdxT subunit. Can also use ribulose 5-phosphate and dihydroxyacetone phosphate as substrates, resulting from enzyme-catalyzed isomerization of RBP and G3P, respectively. The chain is Pyridoxal 5'-phosphate synthase subunit PdxS from Protochlamydia amoebophila (strain UWE25).